A 414-amino-acid polypeptide reads, in one-letter code: Ciliary microtubule-associated protein 2 (414 aa).

The chain is Ciliary microtubule-associated protein 2 (Cimap2) from Mus musculus (Mouse).